The chain runs to 185 residues: Protein TIFY 5 (185 aa).

The 35-residue stretch at 38 to 72 (AAEARRNLTIFYNGRMCAVNVTELQARTIISMASQ) folds into the Tify domain. A disordered region spans residues 77 to 185 (KQQQQQIQGR…RAAAPLYARR (109 aa)). Over residues 137–157 (PRAGLQAAAAAAPTMNQPPAA) the composition is skewed to low complexity. A Jas motif is present at residues 155–182 (PAASGLSMKRSLQRFLEKRKTRAAAPLY). The short motif at 162 to 169 (MKRSLQRF) is the Nuclear localization signal element.

Belongs to the TIFY/JAZ family. Post-translationally, ubiquitinated. Targeted for degradation by the SCF(COI1) E3 ubiquitin ligase-proteasome pathway during jasmonate signaling.

The protein localises to the nucleus. Its function is as follows. Repressor of jasmonate responses. The polypeptide is Protein TIFY 5 (Oryza sativa subsp. indica (Rice)).